Reading from the N-terminus, the 775-residue chain is Phenylalanine--tRNA ligase beta subunit (775 aa).

The tRNA-binding domain maps to 39–147; the sequence is GIDLDGVVFG…EDFKPGTDAN (109 aa). The B5 domain occupies 394 to 470; the sequence is YKPKKVFLPQ…RVKGYEHYTS (77 aa). Mg(2+)-binding residues include Asp-448, Asp-454, Glu-457, and Glu-458. Residues 681 to 774 form the FDX-ACB domain; the sequence is AKFPPVVRDI…LKEKYGVELR (94 aa).

The protein belongs to the phenylalanyl-tRNA synthetase beta subunit family. Type 1 subfamily. In terms of assembly, tetramer of two alpha and two beta subunits. The cofactor is Mg(2+).

Its subcellular location is the cytoplasm. The catalysed reaction is tRNA(Phe) + L-phenylalanine + ATP = L-phenylalanyl-tRNA(Phe) + AMP + diphosphate + H(+). The protein is Phenylalanine--tRNA ligase beta subunit (pheT) of Aquifex aeolicus (strain VF5).